We begin with the raw amino-acid sequence, 536 residues long: Phosphoenolpyruvate carboxykinase (ATP) (536 aa).

3 residues coordinate substrate: Arg63, Tyr203, and Lys209. Residues Lys209, His228, and 244-252 contribute to the ATP site; that span reads GLSGTGKTT. 2 residues coordinate Mn(2+): Lys209 and His228. Asp265 is a Mn(2+) binding site. Residues Glu293, Arg329, 445–446, and Thr451 each bind ATP; that span reads RI. Arg329 lines the substrate pocket.

Belongs to the phosphoenolpyruvate carboxykinase (ATP) family. As to quaternary structure, monomer. It depends on Mn(2+) as a cofactor.

Its subcellular location is the cytoplasm. The catalysed reaction is oxaloacetate + ATP = phosphoenolpyruvate + ADP + CO2. It participates in carbohydrate biosynthesis; gluconeogenesis. Involved in the gluconeogenesis. Catalyzes the conversion of oxaloacetate (OAA) to phosphoenolpyruvate (PEP) through direct phosphoryl transfer between the nucleoside triphosphate and OAA. This chain is Phosphoenolpyruvate carboxykinase (ATP), found in Colwellia psychrerythraea (strain 34H / ATCC BAA-681) (Vibrio psychroerythus).